The following is a 363-amino-acid chain: Probable dual-specificity RNA methyltransferase RlmN (363 aa).

Catalysis depends on Glu-106, which acts as the Proton acceptor. A Radical SAM core domain is found at 112–345; the sequence is HEYGNSVCVT…VTIRREQGHD (234 aa). Cys-119 and Cys-350 are disulfide-bonded. 3 residues coordinate [4Fe-4S] cluster: Cys-126, Cys-130, and Cys-133. Residues 176 to 177, Ser-208, 231 to 233, and Asn-307 contribute to the S-adenosyl-L-methionine site; these read GE and SLH. Cys-350 serves as the catalytic S-methylcysteine intermediate.

This sequence belongs to the radical SAM superfamily. RlmN family. [4Fe-4S] cluster is required as a cofactor.

It localises to the cytoplasm. The enzyme catalyses adenosine(2503) in 23S rRNA + 2 reduced [2Fe-2S]-[ferredoxin] + 2 S-adenosyl-L-methionine = 2-methyladenosine(2503) in 23S rRNA + 5'-deoxyadenosine + L-methionine + 2 oxidized [2Fe-2S]-[ferredoxin] + S-adenosyl-L-homocysteine. It carries out the reaction adenosine(37) in tRNA + 2 reduced [2Fe-2S]-[ferredoxin] + 2 S-adenosyl-L-methionine = 2-methyladenosine(37) in tRNA + 5'-deoxyadenosine + L-methionine + 2 oxidized [2Fe-2S]-[ferredoxin] + S-adenosyl-L-homocysteine. In terms of biological role, specifically methylates position 2 of adenine 2503 in 23S rRNA and position 2 of adenine 37 in tRNAs. The polypeptide is Probable dual-specificity RNA methyltransferase RlmN (Bacillus velezensis (strain DSM 23117 / BGSC 10A6 / LMG 26770 / FZB42) (Bacillus amyloliquefaciens subsp. plantarum)).